Reading from the N-terminus, the 420-residue chain is Tyrosine--tRNA ligase 1 (420 aa).

Residue Y35 coordinates L-tyrosine. Residues P40–H49 carry the 'HIGH' region motif. The L-tyrosine site is built by Y172 and Q176. The short motif at K232–T236 is the 'KMSKS' region element. Residue K235 participates in ATP binding. In terms of domain architecture, S4 RNA-binding spans I355–L419.

Belongs to the class-I aminoacyl-tRNA synthetase family. TyrS type 1 subfamily. As to quaternary structure, homodimer.

It is found in the cytoplasm. The enzyme catalyses tRNA(Tyr) + L-tyrosine + ATP = L-tyrosyl-tRNA(Tyr) + AMP + diphosphate + H(+). Catalyzes the attachment of tyrosine to tRNA(Tyr) in a two-step reaction: tyrosine is first activated by ATP to form Tyr-AMP and then transferred to the acceptor end of tRNA(Tyr). This is Tyrosine--tRNA ligase 1 from Pseudoalteromonas translucida (strain TAC 125).